The primary structure comprises 158 residues: Large ribosomal subunit protein uL15 (158 aa).

Over residues 1-13 (MKLNEIKDNEGST) the composition is skewed to basic and acidic residues. Residues 1 to 45 (MKLNEIKDNEGSTHSRKRLGRGIGSGSGKTGGRGVKGQKSRSGVA) are disordered. A compositionally biased stretch (gly residues) spans 21–35 (RGIGSGSGKTGGRGV).

Belongs to the universal ribosomal protein uL15 family. Part of the 50S ribosomal subunit.

In terms of biological role, binds to the 23S rRNA. The sequence is that of Large ribosomal subunit protein uL15 from Rhizobium etli (strain CIAT 652).